A 99-amino-acid chain; its full sequence is 10 kDa heat shock protein, mitochondrial (99 aa).

The protein belongs to the GroES chaperonin family. Homoheptamer arranged in a ring structure. 2 heptameric Hsp10 rings interact with a Hsp60 tetradecamer in the structure of a back-to-back double heptameric ring to form the symmetrical football complex.

It is found in the mitochondrion matrix. Functionally, co-chaperonin implicated in mitochondrial protein import and macromolecular assembly. Together with Hsp60, facilitates the correct folding of imported proteins. May also prevent misfolding and promote the refolding and proper assembly of unfolded polypeptides generated under stress conditions in the mitochondrial matrix. The functional units of these chaperonins consist of heptameric rings of the large subunit Hsp60, which function as a back-to-back double ring. In a cyclic reaction, Hsp60 ring complexes bind one unfolded substrate protein per ring, followed by the binding of ATP and association with 2 heptameric rings of the co-chaperonin Hsp10. This leads to sequestration of the substrate protein in the inner cavity of Hsp60 where, for a certain period of time, it can fold undisturbed by other cell components. Synchronous hydrolysis of ATP in all Hsp60 subunits results in the dissociation of the chaperonin rings and the release of ADP and the folded substrate protein. This Oryzias latipes (Japanese rice fish) protein is 10 kDa heat shock protein, mitochondrial (hspe1).